We begin with the raw amino-acid sequence, 496 residues long: Deoxyribodipyrimidine photo-lyase (496 aa).

Positions 28–160 constitute a Photolyase/cryptochrome alpha/beta domain; that stretch reads GPVVYWMFRD…EVDAHNVVPM (133 aa). FAD-binding positions include Y256, 269-273, 307-315, and 415-417; these read LSGLS, ELIVRRELS, and DGR. Residue E307 coordinates DNA.

It belongs to the DNA photolyase class-2 family. The cofactor is FAD. Highly expressed in flowers. Expressed in roots and stems.

It localises to the nucleus. It catalyses the reaction cyclobutadipyrimidine (in DNA) = 2 pyrimidine residues (in DNA).. Functionally, involved in repair of UV radiation-induced DNA damage. Catalyzes the light-dependent monomerization (300-600 nm) of cyclobutylpyrimidine dimers (CPDs), which are formed between adjacent bases on the same DNA strand upon exposure to ultraviolet radiation. Required for plant survival in the presence of UV-B light. Not involved in the repair of (6-4) photoproducts. This is Deoxyribodipyrimidine photo-lyase (PHR1) from Arabidopsis thaliana (Mouse-ear cress).